The chain runs to 217 residues: Protein-L-isoaspartate O-methyltransferase 2 (217 aa).

The active site involves Ser64.

This sequence belongs to the methyltransferase superfamily. L-isoaspartyl/D-aspartyl protein methyltransferase family.

It localises to the cytoplasm. It carries out the reaction [protein]-L-isoaspartate + S-adenosyl-L-methionine = [protein]-L-isoaspartate alpha-methyl ester + S-adenosyl-L-homocysteine. Its function is as follows. Catalyzes the methyl esterification of L-isoaspartyl residues in peptides and proteins that result from spontaneous decomposition of normal L-aspartyl and L-asparaginyl residues. It plays a role in the repair and/or degradation of damaged proteins. The chain is Protein-L-isoaspartate O-methyltransferase 2 from Rhodopseudomonas palustris (strain HaA2).